We begin with the raw amino-acid sequence, 237 residues long: Ribonuclease PH (237 aa).

Phosphate-binding positions include Arg86 and 124-126; that span reads GTR.

The protein belongs to the RNase PH family. Homohexameric ring arranged as a trimer of dimers.

The enzyme catalyses tRNA(n+1) + phosphate = tRNA(n) + a ribonucleoside 5'-diphosphate. In terms of biological role, phosphorolytic 3'-5' exoribonuclease that plays an important role in tRNA 3'-end maturation. Removes nucleotide residues following the 3'-CCA terminus of tRNAs; can also add nucleotides to the ends of RNA molecules by using nucleoside diphosphates as substrates, but this may not be physiologically important. Probably plays a role in initiation of 16S rRNA degradation (leading to ribosome degradation) during starvation. This Myxococcus xanthus (strain DK1622) protein is Ribonuclease PH.